A 340-amino-acid chain; its full sequence is NADH-quinone oxidoreductase subunit H 2 (340 aa).

Helical transmembrane passes span Leu-10 to Leu-30, Phe-84 to Ile-104, Val-126 to Gly-146, Met-172 to Val-192, Val-198 to Glu-218, Val-255 to Ile-275, Met-279 to Phe-299, and Val-318 to Ala-338.

The protein belongs to the complex I subunit 1 family. In terms of assembly, NDH-1 is composed of 14 different subunits. Subunits NuoA, H, J, K, L, M, N constitute the membrane sector of the complex.

The protein resides in the cell inner membrane. The catalysed reaction is a quinone + NADH + 5 H(+)(in) = a quinol + NAD(+) + 4 H(+)(out). NDH-1 shuttles electrons from NADH, via FMN and iron-sulfur (Fe-S) centers, to quinones in the respiratory chain. The immediate electron acceptor for the enzyme in this species is believed to be ubiquinone. Couples the redox reaction to proton translocation (for every two electrons transferred, four hydrogen ions are translocated across the cytoplasmic membrane), and thus conserves the redox energy in a proton gradient. This subunit may bind ubiquinone. In Rhizobium etli (strain ATCC 51251 / DSM 11541 / JCM 21823 / NBRC 15573 / CFN 42), this protein is NADH-quinone oxidoreductase subunit H 2.